Consider the following 93-residue polypeptide: Precursor of CEP13 (93 aa).

A signal peptide spans 1-27 (MARPRISISMICLLILIVGFVLQSSQA). A propeptide spanning residues 28 to 78 (RKVLVPYGTSKGLFLSALPKGNVPPSGPSDKGHTSPPDDTDQRMVPENSPE) is cleaved from the precursor. A disordered region spans residues 45-93 (LPKGNVPPSGPSDKGHTSPPDDTDQRMVPENSPEIYRRLESVPSPGVGH). 2 positions are modified to hydroxyproline: Pro87 and Pro89.

It belongs to the C-terminally encoded plant signaling peptide (CEP) family. In terms of assembly, interacts with CEP receptors (e.g. CEPR1 and CEPR2). Post-translationally, the mature small signaling peptide is generated by proteolytic processing of the longer precursor.

It localises to the secreted. It is found in the extracellular space. The protein resides in the apoplast. Extracellular signaling peptide that may regulate primary root growth rate and systemic nitrogen (N)-demand signaling. This is Precursor of CEP13 from Arabidopsis thaliana (Mouse-ear cress).